The following is a 311-amino-acid chain: tRNA-cytidine(32) 2-sulfurtransferase (311 aa).

The PP-loop motif motif lies at 47-52 (SGGKDS). [4Fe-4S] cluster contacts are provided by Cys-122, Cys-125, and Cys-213.

It belongs to the TtcA family. In terms of assembly, homodimer. Mg(2+) is required as a cofactor. [4Fe-4S] cluster serves as cofactor.

It is found in the cytoplasm. The catalysed reaction is cytidine(32) in tRNA + S-sulfanyl-L-cysteinyl-[cysteine desulfurase] + AH2 + ATP = 2-thiocytidine(32) in tRNA + L-cysteinyl-[cysteine desulfurase] + A + AMP + diphosphate + H(+). Its pathway is tRNA modification. Its function is as follows. Catalyzes the ATP-dependent 2-thiolation of cytidine in position 32 of tRNA, to form 2-thiocytidine (s(2)C32). The sulfur atoms are provided by the cysteine/cysteine desulfurase (IscS) system. The sequence is that of tRNA-cytidine(32) 2-sulfurtransferase from Escherichia coli O45:K1 (strain S88 / ExPEC).